Reading from the N-terminus, the 947-residue chain is ATPase 10, plasma membrane-type (947 aa).

The Cytoplasmic segment spans residues 1–69 (MAEDLDKPLL…EKQENRFVKF (69 aa)). Residues 70–89 (LGFMWNPLSWVMEAAALMAI) traverse the membrane as a helical segment. The Extracellular portion of the chain corresponds to 90–101 (ALANSQSLGPDW). A helical transmembrane segment spans residues 102-122 (EDFTGIVCLLLINATISFFEE). The Cytoplasmic segment spans residues 123–251 (NNAGNAAAAL…GHFQQVLTSI (129 aa)). Residues 252–272 (GNFCICSIAVGMVLEIIIMFP) form a helical membrane-spanning segment. At 273–281 (VQHRSYRIG) the chain is on the extracellular side. A helical transmembrane segment spans residues 282–299 (INNLLVLLIGGIPIAMPT). Topologically, residues 300-650 (VLSVTLAIGS…TSRAIFQRMR (351 aa)) are cytoplasmic. D337 (4-aspartylphosphate intermediate) is an active-site residue. D595 and D599 together coordinate Mg(2+). The chain crosses the membrane as a helical span at residues 651-672 (NYTVYAVSITIRIVLGFTLLAL). Residues 673-677 (IWEYD) are Extracellular-facing. The chain crosses the membrane as a helical span at residues 678 to 700 (FPPFMVLIIAILNDGTIMTISKD). Residues 701-716 (RVRPSPTPESWKLNQI) lie on the Cytoplasmic side of the membrane. A helical membrane pass occupies residues 717–737 (FATGIVIGTYLALVTVLFYWI). The Extracellular portion of the chain corresponds to 738 to 758 (IVSTTFFEKHFHVKSIANNSE). The helical transmembrane segment at 759–779 (QVSSAMYLQVSIISQALIFVT) threads the bilayer. The Cytoplasmic segment spans residues 780–791 (RSRGWSFFERPG). Residues 792–812 (TLLIFAFILAQLAATLIAVYA) form a helical membrane-spanning segment. Residues 813–820 (NISFAKIT) lie on the Extracellular side of the membrane. Residues 821–841 (GIGWRWAGVIWLYSLIFYIPL) traverse the membrane as a helical segment. The Cytoplasmic portion of the chain corresponds to 842 to 947 (DVIKFVFHYA…QRMIRAAHTV (106 aa)). 2 positions are modified to phosphoserine: S897 and S929. T946 is subject to Phosphothreonine.

It belongs to the cation transport ATPase (P-type) (TC 3.A.3) family. Type IIIA subfamily. As to expression, found primarily in developing seeds. Expressed in guard cells, mesophyll cells, leaves and roots.

The protein localises to the membrane. The catalysed reaction is ATP + H2O + H(+)(in) = ADP + phosphate + 2 H(+)(out). In terms of biological role, the plasma membrane H(+) ATPase of plants and fungi generates a proton gradient that drives the active transport of nutrients by H(+)-symport. The resulting external acidification and/or internal alkinization may mediate growth responses. The protein is ATPase 10, plasma membrane-type (AHA10) of Arabidopsis thaliana (Mouse-ear cress).